The chain runs to 268 residues: Undecaprenyl-diphosphatase (268 aa).

The next 7 membrane-spanning stretches (helical) occupy residues 41-61 (PGPSLSAIIQLGSVLALVCYF), 89-109 (IFIGTIPIILLGGTIKLFVPY), 114-134 (IFRSNLSIALVSFLMAILMYI), 155-175 (LIGLSQALAIFPGVSRSGVTI), 191-211 (FSFLLGMPAISFAAIVEFISS), 218-238 (FSFFPLIVGLTTTFLSSLLAI), and 248-268 (NGLKLFIIYRIVFGFVILLNL).

This sequence belongs to the UppP family.

The protein resides in the cell inner membrane. It catalyses the reaction di-trans,octa-cis-undecaprenyl diphosphate + H2O = di-trans,octa-cis-undecaprenyl phosphate + phosphate + H(+). Functionally, catalyzes the dephosphorylation of undecaprenyl diphosphate (UPP). Confers resistance to bacitracin. The sequence is that of Undecaprenyl-diphosphatase from Prochlorococcus marinus (strain MIT 9312).